The primary structure comprises 217 residues: EF-hand domain-containing protein D2 homolog (217 aa).

Low complexity predominate over residues 1-28 (MSVSSNASSASNKDSVDSPSSTTNTDSS). The interval 1–29 (MSVSSNASSASNKDSVDSPSSTTNTDSSE) is disordered. EF-hand domains lie at 69-104 (NQIK…LGAP) and 105-140 (QTHL…AQAG). Residues Asp-82, Asp-86, Glu-93, Asp-118, Asp-120, Asp-122, Lys-124, and Glu-129 each contribute to the Ca(2+) site. Residues 191–204 (EQEERRREEEERAQ) show a composition bias toward basic and acidic residues. The disordered stretch occupies residues 191–217 (EQEERRREEEERAQRRQQFQQRAAIFQ). Residues 206–217 (RQQFQQRAAIFQ) are compositionally biased toward low complexity.

In Drosophila melanogaster (Fruit fly), this protein is EF-hand domain-containing protein D2 homolog (Swip-1).